Reading from the N-terminus, the 308-residue chain is ADP-L-glycero-D-manno-heptose-6-epimerase (308 aa).

Residues 10–11 (FI), 31–32 (DN), K38, K53, 75–79 (EGACS), and N92 contribute to the NADP(+) site. The active-site Proton acceptor is Y139. K143 is a binding site for NADP(+). N168 contacts substrate. NADP(+) is bound by residues V169 and K177. The active-site Proton acceptor is K177. Substrate is bound by residues S179, H186, 200–203 (FAGS), R208, and Y271.

This sequence belongs to the NAD(P)-dependent epimerase/dehydratase family. HldD subfamily. Homopentamer. Requires NADP(+) as cofactor.

It catalyses the reaction ADP-D-glycero-beta-D-manno-heptose = ADP-L-glycero-beta-D-manno-heptose. The protein operates within nucleotide-sugar biosynthesis; ADP-L-glycero-beta-D-manno-heptose biosynthesis; ADP-L-glycero-beta-D-manno-heptose from D-glycero-beta-D-manno-heptose 7-phosphate: step 4/4. Functionally, catalyzes the interconversion between ADP-D-glycero-beta-D-manno-heptose and ADP-L-glycero-beta-D-manno-heptose via an epimerization at carbon 6 of the heptose. This chain is ADP-L-glycero-D-manno-heptose-6-epimerase, found in Actinobacillus succinogenes (strain ATCC 55618 / DSM 22257 / CCUG 43843 / 130Z).